The following is a 506-amino-acid chain: Maturase K (506 aa).

The protein belongs to the intron maturase 2 family. MatK subfamily.

It is found in the plastid. The protein resides in the chloroplast. Functionally, usually encoded in the trnK tRNA gene intron. Probably assists in splicing its own and other chloroplast group II introns. This is Maturase K from Melilotus albus (White sweet clover).